The sequence spans 197 residues: Segregation and condensation protein B (197 aa).

Belongs to the ScpB family. In terms of assembly, homodimer. Homodimerization may be required to stabilize the binding of ScpA to the Smc head domains. Component of a cohesin-like complex composed of ScpA, ScpB and the Smc homodimer, in which ScpA and ScpB bind to the head domain of Smc. The presence of the three proteins is required for the association of the complex with DNA.

Its subcellular location is the cytoplasm. Participates in chromosomal partition during cell division. May act via the formation of a condensin-like complex containing Smc and ScpA that pull DNA away from mid-cell into both cell halves. The sequence is that of Segregation and condensation protein B from Bacillus pumilus (strain SAFR-032).